The chain runs to 271 residues: Solute carrier family 66 member 2 (271 aa).

3 consecutive transmembrane segments (helical) span residues 7 to 27 (GWLL…AMVF), 49 to 69 (FSTH…LFWF), and 72 to 92 (HFES…LLML). In terms of domain architecture, PQ-loop 1 spans 14-80 (HQLVSWVAAG…RHFESPLLWQ (67 aa)). Ser110 carries the phosphoserine modification. The next 3 helical transmembrane spans lie at 143 to 163 (FADY…ITYL), 168 to 188 (ALFV…LGVP), and 232 to 252 (VCGL…YAFA). One can recognise a PQ-loop 2 domain in the interval 149–215 (CVLAFTGVAG…MVLMWTSGDT (67 aa)).

The protein resides in the membrane. The protein is Solute carrier family 66 member 2 (Slc66a2) of Rattus norvegicus (Rat).